The sequence spans 510 residues: Histidine ammonia-lyase (510 aa).

A cross-link (5-imidazolinone (Ala-Gly)) is located at residues 143-145 (ASG). At serine 144 the chain carries 2,3-didehydroalanine (Ser).

Belongs to the PAL/histidase family. In terms of processing, contains an active site 4-methylidene-imidazol-5-one (MIO), which is formed autocatalytically by cyclization and dehydration of residues Ala-Ser-Gly.

Its subcellular location is the cytoplasm. The enzyme catalyses L-histidine = trans-urocanate + NH4(+). It functions in the pathway amino-acid degradation; L-histidine degradation into L-glutamate; N-formimidoyl-L-glutamate from L-histidine: step 1/3. The polypeptide is Histidine ammonia-lyase (Shewanella piezotolerans (strain WP3 / JCM 13877)).